The chain runs to 271 residues: Tryptophan synthase alpha chain (271 aa).

Catalysis depends on proton acceptor residues Glu49 and Asp60.

Belongs to the TrpA family. In terms of assembly, tetramer of two alpha and two beta chains.

The catalysed reaction is (1S,2R)-1-C-(indol-3-yl)glycerol 3-phosphate + L-serine = D-glyceraldehyde 3-phosphate + L-tryptophan + H2O. It participates in amino-acid biosynthesis; L-tryptophan biosynthesis; L-tryptophan from chorismate: step 5/5. In terms of biological role, the alpha subunit is responsible for the aldol cleavage of indoleglycerol phosphate to indole and glyceraldehyde 3-phosphate. The polypeptide is Tryptophan synthase alpha chain (Buchnera aphidicola subsp. Schizaphis graminum (strain Sg)).